The chain runs to 681 residues: Pseudohemocyanin-2 (681 aa).

Residues 1 to 21 (VLLCSLVAATAAWPYFGGFQR) form the signal peptide. Residues Asn98, Asn191, Asn228, and Asn624 are each glycosylated (N-linked (GlcNAc...) asparagine).

The protein belongs to the tyrosinase family. Hemocyanin subfamily. Hexamer. In terms of tissue distribution, strongly expressed in ovaries. Also expressed in heart. Not detected in hepatopancreas, gills, connective tissue or muscle.

Does not function as a hemocyanin. This Homarus americanus (American lobster) protein is Pseudohemocyanin-2.